The following is a 467-amino-acid chain: Dimethylamine methyltransferase MtbB1 (467 aa).

Residue O356 is a non-standard amino acid, pyrrolysine.

Belongs to the dimethylamine methyltransferase family.

The enzyme catalyses Co(I)-[dimethylamine-specific corrinoid protein] + dimethylamine + H(+) = methyl-Co(III)-[dimethylamine-specific corrinoid protein] + methylamine. It participates in one-carbon metabolism; methanogenesis from dimethylamine. Functionally, catalyzes the transfer of a methyl group from dimethylamine to the corrinoid cofactor of MtbC. The chain is Dimethylamine methyltransferase MtbB1 (mtbB1) from Methanosarcina barkeri (strain Fusaro / DSM 804).